A 154-amino-acid polypeptide reads, in one-letter code: 6,7-dimethyl-8-ribityllumazine synthase (154 aa).

Residues Phe-22, 56–58 (SFE), and 81–83 (VLI) contribute to the 5-amino-6-(D-ribitylamino)uracil site. (2S)-2-hydroxy-3-oxobutyl phosphate is bound at residue 86 to 87 (ET). The active-site Proton donor is His-89. 5-amino-6-(D-ribitylamino)uracil is bound at residue Phe-114. Arg-128 contacts (2S)-2-hydroxy-3-oxobutyl phosphate.

It belongs to the DMRL synthase family.

It carries out the reaction (2S)-2-hydroxy-3-oxobutyl phosphate + 5-amino-6-(D-ribitylamino)uracil = 6,7-dimethyl-8-(1-D-ribityl)lumazine + phosphate + 2 H2O + H(+). Its pathway is cofactor biosynthesis; riboflavin biosynthesis; riboflavin from 2-hydroxy-3-oxobutyl phosphate and 5-amino-6-(D-ribitylamino)uracil: step 1/2. Functionally, catalyzes the formation of 6,7-dimethyl-8-ribityllumazine by condensation of 5-amino-6-(D-ribitylamino)uracil with 3,4-dihydroxy-2-butanone 4-phosphate. This is the penultimate step in the biosynthesis of riboflavin. This chain is 6,7-dimethyl-8-ribityllumazine synthase, found in Chlamydia caviae (strain ATCC VR-813 / DSM 19441 / 03DC25 / GPIC) (Chlamydophila caviae).